Here is a 525-residue protein sequence, read N- to C-terminus: GMP synthase [glutamine-hydrolyzing] (525 aa).

The region spanning 9 to 207 (RILILDFGSQ…VRDICQCEAL (199 aa)) is the Glutamine amidotransferase type-1 domain. Cys-86 acts as the Nucleophile in catalysis. Residues His-181 and Glu-183 contribute to the active site. The GMPS ATP-PPase domain occupies 208–400 (WTPAKIIDDA…LGLPYDMLYR (193 aa)). 235–241 (SGGVDSS) serves as a coordination point for ATP.

As to quaternary structure, homodimer.

It carries out the reaction XMP + L-glutamine + ATP + H2O = GMP + L-glutamate + AMP + diphosphate + 2 H(+). It participates in purine metabolism; GMP biosynthesis; GMP from XMP (L-Gln route): step 1/1. Its function is as follows. Catalyzes the synthesis of GMP from XMP. The polypeptide is GMP synthase [glutamine-hydrolyzing] (Shigella sonnei (strain Ss046)).